The chain runs to 790 residues: Lon protease (790 aa).

A Lon N-terminal domain is found at 13 to 209 (LPLFPIRNTV…RLTDHVAKEI (197 aa)). Position 362-369 (362-369 (GPPGVGKT)) interacts with ATP. One can recognise a Lon proteolytic domain in the interval 598 to 779 (DNQVGITIGL…DQVLDIALAT (182 aa)). Catalysis depends on residues Ser685 and Lys728.

The protein belongs to the peptidase S16 family. Homohexamer. Organized in a ring with a central cavity.

Its subcellular location is the cytoplasm. The enzyme catalyses Hydrolysis of proteins in presence of ATP.. Functionally, ATP-dependent serine protease that mediates the selective degradation of mutant and abnormal proteins as well as certain short-lived regulatory proteins. Required for cellular homeostasis and for survival from DNA damage and developmental changes induced by stress. Degrades polypeptides processively to yield small peptide fragments that are 5 to 10 amino acids long. Binds to DNA in a double-stranded, site-specific manner. The polypeptide is Lon protease (Orientia tsutsugamushi (strain Ikeda) (Rickettsia tsutsugamushi)).